The following is a 273-amino-acid chain: Protein FAM216A (273 aa).

The segment at 1–47 (MLGQLLPHTARGLGAAEMPGQGPGSDWTERSSSAEPPAVAGTEGGGG) is disordered.

The protein belongs to the FAM216 family.

This Homo sapiens (Human) protein is Protein FAM216A (FAM216A).